The following is a 365-amino-acid chain: Eukaryotic translation initiation factor 3 subunit H (365 aa).

The MPN domain maps to 11-160 (VKVEALVVMK…LRAFRLSPKF (150 aa)).

The protein belongs to the eIF-3 subunit H family. Component of the eukaryotic translation initiation factor 3 (eIF-3) complex.

The protein localises to the cytoplasm. Component of the eukaryotic translation initiation factor 3 (eIF-3) complex, which is involved in protein synthesis of a specialized repertoire of mRNAs and, together with other initiation factors, stimulates binding of mRNA and methionyl-tRNAi to the 40S ribosome. The eIF-3 complex specifically targets and initiates translation of a subset of mRNAs involved in cell proliferation. The polypeptide is Eukaryotic translation initiation factor 3 subunit H (Aspergillus clavatus (strain ATCC 1007 / CBS 513.65 / DSM 816 / NCTC 3887 / NRRL 1 / QM 1276 / 107)).